The sequence spans 429 residues: Probable M18 family aminopeptidase 2 (429 aa).

The Zn(2+) site is built by His82, His156, and His401.

It belongs to the peptidase M18 family. The cofactor is Zn(2+).

The sequence is that of Probable M18 family aminopeptidase 2 from Pseudomonas aeruginosa (strain UCBPP-PA14).